A 267-amino-acid chain; its full sequence is 2-keto-3-deoxy-L-rhamnonate aldolase (267 aa).

The active-site Proton acceptor is His-49. Gln-151 serves as a coordination point for substrate. Position 153 (Glu-153) interacts with Mg(2+). Residues Ala-178 and Asp-179 each coordinate substrate. Asp-179 is a binding site for Mg(2+).

Belongs to the HpcH/HpaI aldolase family. KDR aldolase subfamily. Homohexamer. Mg(2+) serves as cofactor.

The catalysed reaction is 2-dehydro-3-deoxy-L-rhamnonate = (S)-lactaldehyde + pyruvate. Catalyzes the reversible retro-aldol cleavage of 2-keto-3-deoxy-L-rhamnonate (KDR) to pyruvate and lactaldehyde. The chain is 2-keto-3-deoxy-L-rhamnonate aldolase from Salmonella dublin (strain CT_02021853).